A 247-amino-acid polypeptide reads, in one-letter code: MTDPATDTTRRNVHDHEVAKFDAAASRWWDPQGECKPLHDINPLRLDYVAQCLGGLEGRRILDVGCGGGLLAEGMARRGAEVTGIDMSKAALQVARLHALEMEVEVAYRQITVEELADSDEPRFDAVTCLEMLEHVPDPASAVHACARLVKPGGHVIFSTLNRNPKSYLFAILGAEYLLQLLPKGTHDWQQFIRPSELDRWAREADLVLRSMKGLTYNPLNQRYKLTDDTSVNYLAHYQHSPARAGS.

Arginine 45, glycine 65, aspartate 86, and leucine 130 together coordinate S-adenosyl-L-methionine.

This sequence belongs to the methyltransferase superfamily. UbiG/COQ3 family.

It catalyses the reaction a 3-demethylubiquinol + S-adenosyl-L-methionine = a ubiquinol + S-adenosyl-L-homocysteine + H(+). The enzyme catalyses a 3-(all-trans-polyprenyl)benzene-1,2-diol + S-adenosyl-L-methionine = a 2-methoxy-6-(all-trans-polyprenyl)phenol + S-adenosyl-L-homocysteine + H(+). Its pathway is cofactor biosynthesis; ubiquinone biosynthesis. Its function is as follows. O-methyltransferase that catalyzes the 2 O-methylation steps in the ubiquinone biosynthetic pathway. This is Ubiquinone biosynthesis O-methyltransferase from Alkalilimnicola ehrlichii (strain ATCC BAA-1101 / DSM 17681 / MLHE-1).